A 427-amino-acid chain; its full sequence is Probable G-protein coupled receptor 150 (427 aa).

The Extracellular segment spans residues 1–3 (MED). Residues 4-24 (PFSLAILNPASNLSVPTQPSW) form a helical membrane-spanning segment. The Cytoplasmic portion of the chain corresponds to 25–50 (SLNLTSEQGASVPGPHSPPRGPPSHR). Residues 51 to 71 (IHLVFLGIILVAAVAGNTTVL) traverse the membrane as a helical segment. The Extracellular portion of the chain corresponds to 72–89 (CRLCGGSSGPWPGPKRRK). The chain crosses the membrane as a helical span at residues 90 to 110 (MDFLLVQLAAADLYASGGTAL). Residues 111–170 (SQLAWELLGDPRPALGDLACRLSHLLQASGRGASAHLVALIALERQLAVRIPQGPQLPAR) are Cytoplasmic-facing. A helical membrane pass occupies residues 171 to 191 (ALAALSWLLALLLALPPTFVV). The Extracellular segment spans residues 192-230 (RWDAPPSSTANAWPGKHCCRGIFAPLPRWHLQVYALYEA). A helical transmembrane segment spans residues 231-251 (IVGFAAPVALLGFSCGHLLCV). At 252-286 (WWQRGSQAPVARMPWSPSMARASLPSALPQAKVQS) the chain is on the cytoplasmic side. Residues 287-307 (LKMSLALALLFVGCDLPYFAA) traverse the membrane as a helical segment. Topologically, residues 308–327 (RLAAAWSSKPAGDWERESLV) are extracellular. The chain crosses the membrane as a helical span at residues 328-348 (AAMRVLEVANSAINPLIYLFF). Topologically, residues 349 to 427 (QAGDCRLWRR…PPPCSCESAF (79 aa)) are cytoplasmic. A disordered region spans residues 402 to 427 (EERNQGCLRPPPPRPRPPPCSCESAF). The span at 410–421 (RPPPPRPRPPPC) shows a compositional bias: pro residues.

Belongs to the G-protein coupled receptor 1 family.

It is found in the cell membrane. Its function is as follows. Orphan receptor. The protein is Probable G-protein coupled receptor 150 (Gpr150) of Mus musculus (Mouse).